The chain runs to 208 residues: 2-phospho-L-lactate guanylyltransferase (208 aa).

This sequence belongs to the CofC family. Homodimer.

It carries out the reaction (2S)-2-phospholactate + GTP + H(+) = (2S)-lactyl-2-diphospho-5'-guanosine + diphosphate. It participates in cofactor biosynthesis; coenzyme F420 biosynthesis. Functionally, guanylyltransferase that catalyzes the activation of (2S)-2-phospholactate (2-PL) as (2S)-lactyl-2-diphospho-5'-guanosine, via the condensation of 2-PL with GTP. It is involved in the biosynthesis of coenzyme F420, a hydride carrier cofactor. The sequence is that of 2-phospho-L-lactate guanylyltransferase from Haloarcula marismortui (strain ATCC 43049 / DSM 3752 / JCM 8966 / VKM B-1809) (Halobacterium marismortui).